The sequence spans 192 residues: Peptidyl-tRNA hydrolase (192 aa).

Residue tyrosine 14 participates in tRNA binding. The active-site Proton acceptor is histidine 19. TRNA contacts are provided by tyrosine 64, asparagine 66, and asparagine 112.

Belongs to the PTH family. In terms of assembly, monomer.

The protein localises to the cytoplasm. The enzyme catalyses an N-acyl-L-alpha-aminoacyl-tRNA + H2O = an N-acyl-L-amino acid + a tRNA + H(+). Functionally, hydrolyzes ribosome-free peptidyl-tRNAs (with 1 or more amino acids incorporated), which drop off the ribosome during protein synthesis, or as a result of ribosome stalling. Catalyzes the release of premature peptidyl moieties from peptidyl-tRNA molecules trapped in stalled 50S ribosomal subunits, and thus maintains levels of free tRNAs and 50S ribosomes. In Anaeromyxobacter dehalogenans (strain 2CP-1 / ATCC BAA-258), this protein is Peptidyl-tRNA hydrolase.